Consider the following 571-residue polypeptide: Proline--tRNA ligase (571 aa).

This sequence belongs to the class-II aminoacyl-tRNA synthetase family. ProS type 1 subfamily. In terms of assembly, homodimer.

The protein resides in the cytoplasm. The catalysed reaction is tRNA(Pro) + L-proline + ATP = L-prolyl-tRNA(Pro) + AMP + diphosphate. Functionally, catalyzes the attachment of proline to tRNA(Pro) in a two-step reaction: proline is first activated by ATP to form Pro-AMP and then transferred to the acceptor end of tRNA(Pro). As ProRS can inadvertently accommodate and process non-cognate amino acids such as alanine and cysteine, to avoid such errors it has two additional distinct editing activities against alanine. One activity is designated as 'pretransfer' editing and involves the tRNA(Pro)-independent hydrolysis of activated Ala-AMP. The other activity is designated 'posttransfer' editing and involves deacylation of mischarged Ala-tRNA(Pro). The misacylated Cys-tRNA(Pro) is not edited by ProRS. The protein is Proline--tRNA ligase of Pseudomonas entomophila (strain L48).